A 525-amino-acid chain; its full sequence is GMP synthase [glutamine-hydrolyzing] (525 aa).

The region spanning 9-207 (RILILDFGSQ…VLDICGCAAL (199 aa)) is the Glutamine amidotransferase type-1 domain. Cys-86 acts as the Nucleophile in catalysis. Residues His-181 and Glu-183 contribute to the active site. In terms of domain architecture, GMPS ATP-PPase spans 208 to 400 (WTPSNIVDDA…LGLPYDMVYR (193 aa)). Position 235–241 (235–241 (SGGVDSS)) interacts with ATP.

In terms of assembly, homodimer.

It catalyses the reaction XMP + L-glutamine + ATP + H2O = GMP + L-glutamate + AMP + diphosphate + 2 H(+). It participates in purine metabolism; GMP biosynthesis; GMP from XMP (L-Gln route): step 1/1. Catalyzes the synthesis of GMP from XMP. This is GMP synthase [glutamine-hydrolyzing] from Pseudomonas aeruginosa (strain UCBPP-PA14).